Reading from the N-terminus, the 561-residue chain is Arginine--tRNA ligase (561 aa).

The 'HIGH' region motif lies at 129–139 (ANPTGPLHIGH).

Belongs to the class-I aminoacyl-tRNA synthetase family. As to quaternary structure, monomer.

The protein resides in the cytoplasm. It catalyses the reaction tRNA(Arg) + L-arginine + ATP = L-arginyl-tRNA(Arg) + AMP + diphosphate. This chain is Arginine--tRNA ligase, found in Geotalea daltonii (strain DSM 22248 / JCM 15807 / FRC-32) (Geobacter daltonii).